Reading from the N-terminus, the 303-residue chain is Heme A synthase (303 aa).

Residues 1–8 (MFGKKNLK) lie on the Cytoplasmic side of the membrane. Residues 9 to 29 (WLGVVATLMMTFVQLGGALVT) form a helical membrane-spanning segment. Residues 30–67 (KTGSADGCGSSWPLCHGALIPEFFPIDTIIELSHRAVS) are Extracellular-facing. The cysteines at positions 37 and 44 are disulfide-linked. Residue Glu60 is part of the active site. His63 serves as a coordination point for heme o. A helical membrane pass occupies residues 68 to 88 (ALSLLMVLWLVITAWKHIGYI). The Cytoplasmic portion of the chain corresponds to 89–93 (KEIKP). Residues 94-114 (LSIISVGFLLLQALIGAAAVI) form a helical membrane-spanning segment. The Extracellular portion of the chain corresponds to 115-125 (WQQNDYVLALH). His125 lines the heme o pocket. The chain crosses the membrane as a helical span at residues 126 to 146 (FGISLISFSSVFLITLIIFSI). The Cytoplasmic portion of the chain corresponds to 147-163 (DQKYEADELYIKKPLRR). The helical transmembrane segment at 164-184 (LTWLMAIIIYCGVYTGALVRH) threads the bilayer. Topologically, residues 185–215 (ADASLAYGGWPLPFHDLVPHSEQDWVQLTHR) are extracellular. Position 214 (His214) interacts with heme b. A helical membrane pass occupies residues 216 to 236 (IMAFIVFTIIMITYIHAVKNY). The Cytoplasmic segment spans residues 237 to 244 (PNNRTVHY). The chain crosses the membrane as a helical span at residues 245 to 265 (GYTAAFILVILQVITGALSIM). Residues 266-270 (TNVNL) lie on the Extracellular side of the membrane. The chain crosses the membrane as a helical span at residues 271–291 (IIALFHALFITYLFGMTTYFI). His276 is a heme b binding site. The Cytoplasmic segment spans residues 292–303 (MLMLRSVRSDKQ).

The protein belongs to the COX15/CtaA family. Type 1 subfamily. In terms of assembly, interacts with CtaB. It depends on heme b as a cofactor.

The protein resides in the cell membrane. It catalyses the reaction Fe(II)-heme o + 2 A + H2O = Fe(II)-heme a + 2 AH2. The protein operates within porphyrin-containing compound metabolism; heme A biosynthesis; heme A from heme O: step 1/1. Functionally, catalyzes the conversion of heme O to heme A by two successive hydroxylations of the methyl group at C8. The first hydroxylation forms heme I, the second hydroxylation results in an unstable dihydroxymethyl group, which spontaneously dehydrates, resulting in the formyl group of heme A. The polypeptide is Heme A synthase (Staphylococcus aureus (strain Mu3 / ATCC 700698)).